The chain runs to 378 residues: Sphingosine 1-phosphate receptor 3 (378 aa).

Over 1–44 (MATTHAQGHQPVLGNDTLREHYDYVGKLAGRLRDPPEGGTLITT) the chain is Extracellular. An N-linked (GlcNAc...) asparagine glycan is attached at asparagine 15. A helical transmembrane segment spans residues 45 to 65 (ILFLVTCSFIVLENLMVLIAI). At 66-74 (WKNNKFHNR) the chain is on the cytoplasmic side. Residues 75–95 (MYFFIGNLALCDLLAGIAYKV) form a helical membrane-spanning segment. Topologically, residues 96 to 115 (NILMSGRKTFSLSPTVWFLR) are extracellular. Residues 116–136 (EGSMFVALGASTCSLLAIAIE) form a helical membrane-spanning segment. Residues 137–154 (RHLTMIKMRPYDANKKHR) lie on the Cytoplasmic side of the membrane. A helical transmembrane segment spans residues 155–175 (VFLLIGMCWLIAFSLGALPIL). The Extracellular segment spans residues 176 to 196 (GWNCLENFPDCSTILPLYSKK). The chain crosses the membrane as a helical span at residues 197-217 (YIAFLISIFTAILVTIVILYA). At 218–244 (RIYCLVKSSSRRVANHNSERSMALLRT) the chain is on the cytoplasmic side. The chain crosses the membrane as a helical span at residues 245-265 (VVIVVSVFIACWSPLFILFLI). Topologically, residues 266–281 (DVACRAKECSILFKSQ) are extracellular. Residues 282 to 302 (WFIMLAVLNSAMNPVIYTLAS) traverse the membrane as a helical segment. Topologically, residues 303–378 (KEMRRAFFRL…RSFQNGVLCK (76 aa)) are cytoplasmic. The segment at 323–354 (TQASPMQPALDPSRSKSSSSNNSSHSPKVKED) is disordered. Serine 326 carries the phosphoserine modification. Over residues 337–348 (SKSSSSNNSSHS) the composition is skewed to low complexity.

It belongs to the G-protein coupled receptor 1 family. In terms of tissue distribution, most abundant in heart, lung, kidney and spleen; low but detectable in brain, thymus, muscle and testis; and nearly undetectable in liver, stomach, and intestine. Expressed in embryonic lung from embryonic day 14-18. Also abundantly detected in embryonic nasal cartilage, sphenoid bone, vena cava, Meckel's cartilage/incisor teeth, genital tubercle and bladder.

The protein resides in the cell membrane. Its function is as follows. Receptor for the lysosphingolipid sphingosine 1-phosphate (S1P). S1P is a bioactive lysophospholipid that elicits diverse physiological effect on most types of cells and tissues. This is Sphingosine 1-phosphate receptor 3 (S1pr3) from Mus musculus (Mouse).